A 370-amino-acid polypeptide reads, in one-letter code: Elongation factor Ts, mitochondrial (370 aa).

A mitochondrion-targeting transit peptide spans 1 to 29 (MALLSAAPRALRLPRRLPLGAALPALRAL).

It belongs to the EF-Ts family.

The protein localises to the mitochondrion. Functionally, associates with the EF-Tu.GDP complex and induces the exchange of GDP to GTP. It remains bound to the aminoacyl-tRNA.EF-Tu.GTP complex up to the GTP hydrolysis stage on the ribosome. The protein is Elongation factor Ts, mitochondrial of Cryptococcus neoformans var. neoformans serotype D (strain B-3501A) (Filobasidiella neoformans).